Consider the following 386-residue polypeptide: Homoserine O-succinyltransferase (386 aa).

Positions 49-358 (NAILICHALS…DAEQGHDSFL (310 aa)) constitute an AB hydrolase-1 domain. Ser156 acts as the Nucleophile in catalysis. Arg226 lines the substrate pocket. Catalysis depends on residues Asp321 and His354. Asp355 provides a ligand contact to substrate.

This sequence belongs to the AB hydrolase superfamily. MetX family. As to quaternary structure, homodimer.

It localises to the cytoplasm. The enzyme catalyses L-homoserine + succinyl-CoA = O-succinyl-L-homoserine + CoA. It functions in the pathway amino-acid biosynthesis; L-methionine biosynthesis via de novo pathway; O-succinyl-L-homoserine from L-homoserine: step 1/1. In terms of biological role, transfers a succinyl group from succinyl-CoA to L-homoserine, forming succinyl-L-homoserine. This chain is Homoserine O-succinyltransferase, found in Acinetobacter baumannii (strain ACICU).